The sequence spans 469 residues: Protein nucleotidyltransferase YdiU (469 aa).

ATP is bound by residues Gly80, Gly82, Arg83, Lys103, Asp115, Gly116, Arg166, and Arg173. Residue Asp243 is the Proton acceptor of the active site. Mg(2+) contacts are provided by Asn244 and Asp253. Asp253 is a binding site for ATP.

This sequence belongs to the SELO family. Requires Mg(2+) as cofactor. It depends on Mn(2+) as a cofactor.

It carries out the reaction L-seryl-[protein] + ATP = 3-O-(5'-adenylyl)-L-seryl-[protein] + diphosphate. The enzyme catalyses L-threonyl-[protein] + ATP = 3-O-(5'-adenylyl)-L-threonyl-[protein] + diphosphate. It catalyses the reaction L-tyrosyl-[protein] + ATP = O-(5'-adenylyl)-L-tyrosyl-[protein] + diphosphate. The catalysed reaction is L-histidyl-[protein] + UTP = N(tele)-(5'-uridylyl)-L-histidyl-[protein] + diphosphate. It carries out the reaction L-seryl-[protein] + UTP = O-(5'-uridylyl)-L-seryl-[protein] + diphosphate. The enzyme catalyses L-tyrosyl-[protein] + UTP = O-(5'-uridylyl)-L-tyrosyl-[protein] + diphosphate. Nucleotidyltransferase involved in the post-translational modification of proteins. It can catalyze the addition of adenosine monophosphate (AMP) or uridine monophosphate (UMP) to a protein, resulting in modifications known as AMPylation and UMPylation. This is Protein nucleotidyltransferase YdiU from Pseudoalteromonas translucida (strain TAC 125).